A 311-amino-acid chain; its full sequence is Aquaporin-1 (311 aa).

At 1 to 16 the chain is on the cytoplasmic side; it reads MHPQVASLFDNVYEDL. Residues 17-37 traverse the membrane as a helical segment; that stretch reads AAATLEFIGTAFFLLFGLGGI. Residues 38-56 are Extracellular-facing; sequence QASTAEDTASSQPPASGIE. The chain crosses the membrane as a helical span at residues 57 to 77; that stretch reads HVLYISTCMGFSLVVSAWLFF. Position 78 (Arg-78) is a topological domain, cytoplasmic. A helical membrane pass occupies residues 79 to 99; the sequence is VTGGLFNPNISFALLLVGGLK. An NPA 1 motif is present at residues 85-87; it reads NPN. Residue Pro-100 is a topological domain, extracellular. Residues 101–121 form a helical membrane-spanning segment; sequence LRFVLFCIAQLTGAIAGAAIV. Residues 122–143 are Cytoplasmic-facing; that stretch reads RGLTSAPLSVNNVLQQGTSAAQ. A helical membrane pass occupies residues 144 to 164; sequence GVFIEMFITAALVLSVLMLAA. Residues 165-168 are Extracellular-facing; that stretch reads EKHE. Residues 169–189 form a helical membrane-spanning segment; the sequence is ATPFAPVGIGLTLFACHLFAV. Residues 190-215 lie on the Cytoplasmic side of the membrane; the sequence is YYTGAAMNSARAFGPAVISGFPEPQH. The short motif at 197–199 is the NPA 2 element; it reads NSA. A helical membrane pass occupies residues 216 to 236; sequence WVYWVGPFLGSLLGAGFYATL. The Extracellular segment spans residues 237 to 311; the sequence is KHYKYWRLNP…TSSRTNFSPV (75 aa). Residues 276–311 are disordered; that stretch reads DEETRNGCASNEEGVRATGDEKSSNATSSRTNFSPV. Residues 288–298 show a composition bias toward basic and acidic residues; the sequence is EGVRATGDEKS. The segment covering 299-311 has biased composition (polar residues); the sequence is SNATSSRTNFSPV. N-linked (GlcNAc...) asparagine glycosylation occurs at Asn-300.

It belongs to the MIP/aquaporin (TC 1.A.8) family.

It localises to the cell membrane. It catalyses the reaction H2O(in) = H2O(out). The enzyme catalyses H2O2(out) = H2O2(in). It carries out the reaction nitric oxide(out) = nitric oxide(in). The catalysed reaction is CO2(out) = CO2(in). Its function is as follows. Water channel required to facilitate the transport of water across membranes. Also mediates the transport nitric oxide, hydrogen peroxide and carbon dioxide across the membrane. Required for Hartig net development in trembling aspen trees. Contributes in fungal cellular processes during the basidiocarp formation. In Laccaria bicolor (Bicoloured deceiver), this protein is Aquaporin-1.